We begin with the raw amino-acid sequence, 164 residues long: uncharacterized protein (164 aa).

Positions 1 to 17 (MNSRVPATQSWFSSHLP) are enriched in polar residues. Positions 1-48 (MNSRVPATQSWFSSHLPTTEPDLEPATAAEGSTTETATLSPETTSFND) are disordered. The span at 24–45 (EPATAAEGSTTETATLSPETTS) shows a compositional bias: low complexity. A helical membrane pass occupies residues 64 to 84 (MLLSFGIITVIGLAVAMVLYI). Positions 106–130 (TEEQDELEQELLEHGRDAASMQAAA) form a coiled coil.

Its subcellular location is the membrane. This is an uncharacterized protein from Mus musculus (Mouse).